The primary structure comprises 320 residues: Ferrochelatase (320 aa).

Fe cation is bound by residues His194 and Glu275.

Belongs to the ferrochelatase family. In terms of assembly, monomer.

It is found in the cytoplasm. The enzyme catalyses heme b + 2 H(+) = protoporphyrin IX + Fe(2+). The protein operates within porphyrin-containing compound metabolism; protoheme biosynthesis; protoheme from protoporphyrin-IX: step 1/1. In terms of biological role, catalyzes the ferrous insertion into protoporphyrin IX. The protein is Ferrochelatase of Escherichia coli (strain 55989 / EAEC).